Reading from the N-terminus, the 919-residue chain is GPI ethanolamine phosphate transferase 1 (919 aa).

Residues 1–8 (MWSRHRLY) lie on the Cytoplasmic side of the membrane. Residues 9 to 29 (FIVAGVLFHLFYLWSIFDIYF) traverse the membrane as a helical segment. The Lumenal segment spans residues 30-456 (VSPLVHGMKQ…TTYNWRFIRT (427 aa)). Residues N138, N196, N201, N285, and N311 are each glycosylated (N-linked (GlcNAc...) asparagine). Residues 457 to 477 (IVTLGFLGWIVYSFSIFLRLF) traverse the membrane as a helical segment. Residues 478 to 487 (ILNRDYNSHK) lie on the Cytoplasmic side of the membrane. Residues 488–508 (SLLNYFIFGSLTIILNYVLYY) traverse the membrane as a helical segment. The Lumenal segment spans residues 509–510 (QK). The chain crosses the membrane as a helical span at residues 511–531 (APFNYYMYLFFPLIFWSEIFT). Residues 532 to 558 (DRVVLDDGVKEFLKGISIPKRIILVSA) lie on the Cytoplasmic side of the membrane. Residues 559-579 (IILVYESIVYAFFDRWIFSLI) traverse the membrane as a helical segment. Over 580 to 598 (FNMLSFYPLICGYRDWKRN) the chain is Lumenal. A helical transmembrane segment spans residues 599–619 (TLWFITGAAISVFTLLDAVKI). Position 620 (E620) is a topological domain, cytoplasmic. Residues 621–641 (SLTQINIASGLIVLTALSGFL) form a helical membrane-spanning segment. Residues 642–653 (HLRKQLNSYTTT) lie on the Lumenal side of the membrane. A helical transmembrane segment spans residues 654 to 674 (VFICQILLVILMVLATNKSIV). Topologically, residues 675–686 (SLQNRTGLPRDA) are cytoplasmic. A helical membrane pass occupies residues 687-707 (QVAGWVILVVSLLLMPLIHYM). Over 708 to 718 (KPNNNYKVRML) the chain is Lumenal. A helical membrane pass occupies residues 719–739 (IIFLTFAPTFIILTISFESFF). Residues 740 to 773 (YLVFSAYIVQWIEIESKLKEQTPNTSHYKQLIRV) lie on the Cytoplasmic side of the membrane. The helical transmembrane segment at 774–794 (TIIGFFLLQNAFFGTGNVASI) threads the bilayer. Residues 795–815 (SSFSLDSVYRLMPIFDPFPMG) are Lumenal-facing. Residues 816–836 (ALLVIKLIIPYIILSAGLGIL) traverse the membrane as a helical segment. At 837–845 (NLKLHIKDY) the chain is on the cytoplasmic side. Residues 846-866 (TISTLIISTSDILSLNFFYLL) form a helical membrane-spanning segment. Over 867-882 (KTEGSWLDIGITISNY) the chain is Lumenal. The helical transmembrane segment at 883–903 (CLAILSSLFMLILEIVAHVVL) threads the bilayer. The Cytoplasmic segment spans residues 904–919 (KNVQLSKPVIASKKTN).

It belongs to the PIGG/PIGN/PIGO family. PIGN subfamily.

It localises to the endoplasmic reticulum membrane. It participates in glycolipid biosynthesis; glycosylphosphatidylinositol-anchor biosynthesis. Ethanolamine phosphate transferase involved in glycosylphosphatidylinositol-anchor biosynthesis. Transfers ethanolamine phosphate to the first alpha-1,4-linked mannose of the glycosylphosphatidylinositol precursor of GPI-anchor. This chain is GPI ethanolamine phosphate transferase 1 (MCD4), found in Kluyveromyces lactis (strain ATCC 8585 / CBS 2359 / DSM 70799 / NBRC 1267 / NRRL Y-1140 / WM37) (Yeast).